A 453-amino-acid chain; its full sequence is Signal transduction histidine-protein kinase ArlS (453 aa).

The next 2 membrane-spanning stretches (helical) occupy residues 14–34 and 157–177; these read ITTL…IFFL and FVAI…SYIF. Residues 179–232 form the HAMP domain; that stretch reads TQLTKPLVTMSNKMIQIRRDGFQNKLELKTNYEETDNLIDTFNDMMYQIEESFN. The region spanning 240–453 is the Histidine kinase domain; sequence DASHELRTPL…QYTTFKIIFK (214 aa). His243 is modified (phosphohistidine; by autocatalysis).

Autophosphorylated.

It is found in the cell membrane. The catalysed reaction is ATP + protein L-histidine = ADP + protein N-phospho-L-histidine.. Functionally, member of the two-component regulatory system ArlS/ArlR. ArlS probably functions as a sensor protein kinase which is autophosphorylated at a histidine residue and transfers its phosphate group to ArlR. The polypeptide is Signal transduction histidine-protein kinase ArlS (arlS) (Staphylococcus haemolyticus (strain JCSC1435)).